Here is a 505-residue protein sequence, read N- to C-terminus: Cobyric acid synthase (505 aa).

The region spanning arginine 260–valine 453 is the GATase cobBQ-type domain. Cysteine 341 serves as the catalytic Nucleophile. Histidine 445 is a catalytic residue.

This sequence belongs to the CobB/CobQ family. CobQ subfamily.

It functions in the pathway cofactor biosynthesis; adenosylcobalamin biosynthesis. In terms of biological role, catalyzes amidations at positions B, D, E, and G on adenosylcobyrinic A,C-diamide. NH(2) groups are provided by glutamine, and one molecule of ATP is hydrogenolyzed for each amidation. The sequence is that of Cobyric acid synthase from Chlorobium phaeobacteroides (strain DSM 266 / SMG 266 / 2430).